A 282-amino-acid polypeptide reads, in one-letter code: 4-diphosphocytidyl-2-C-methyl-D-erythritol kinase (282 aa).

Lysine 9 is an active-site residue. Position 98–108 (98–108 (PMGGGLGGGSS)) interacts with ATP. Aspartate 140 is an active-site residue.

Belongs to the GHMP kinase family. IspE subfamily. In terms of assembly, homodimer.

The enzyme catalyses 4-CDP-2-C-methyl-D-erythritol + ATP = 4-CDP-2-C-methyl-D-erythritol 2-phosphate + ADP + H(+). Its pathway is isoprenoid biosynthesis; isopentenyl diphosphate biosynthesis via DXP pathway; isopentenyl diphosphate from 1-deoxy-D-xylulose 5-phosphate: step 3/6. Functionally, catalyzes the phosphorylation of the position 2 hydroxy group of 4-diphosphocytidyl-2C-methyl-D-erythritol. The polypeptide is 4-diphosphocytidyl-2-C-methyl-D-erythritol kinase (Salmonella schwarzengrund (strain CVM19633)).